A 1631-amino-acid chain; its full sequence is ALK tyrosine kinase receptor (1631 aa).

Positions 1 to 18 are cleaved as a signal peptide; that stretch reads MGSVGLLGLLLLRLSVTA. Topologically, residues 19–1053 are extracellular; that stretch reads SGSGAGTGSG…PHLPLSLVLS (1035 aa). The segment at 20–53 is disordered; the sequence is GSGAGTGSGTGSGTGTGTGQLVGSPATGPALQPR. The segment covering 21–39 has biased composition (gly residues); sequence SGAGTGSGTGSGTGTGTGQ. Positions 60–82 are heparin-binding region; sequence RLQRKSLAVDFVVPSLFRVYARD. N-linked (GlcNAc...) asparagine glycans are attached at residues Asn185, Asn260, Asn301, Asn340, Asn427, Asn440, Asn461, Asn579, Asn587, and Asn643. In terms of domain architecture, MAM 1 spans 280–443; sequence LECSFDFPCE…DFFALKNCSE (164 aa). The MAM 2 domain maps to 494–652; it reads FYCNFENGFC…NISISLDCYL (159 aa). Cys703 and Cys716 form a disulfide bridge. An N-linked (GlcNAc...) asparagine glycan is attached at Asn724. Cys798 and Cys809 form a disulfide bridge. Residues Asn823, Asn878, Asn879, and Asn901 are each glycosylated (N-linked (GlcNAc...) asparagine). The cysteines at positions 921 and 943 are disulfide-linked. Asn1001 is a glycosylation site (N-linked (GlcNAc...) asparagine). 3 cysteine pairs are disulfide-bonded: Cys1002–Cys1010, Cys1005–Cys1021, and Cys1023–Cys1036. An EGF-like region spans residues 1002-1040; sequence CSHCEGDECHMDPESHKVICFCDHGTVLAEDGVSCIVSP. Residues 1054 to 1074 form a helical membrane-spanning segment; it reads VVTSALVAALVLAFSGIMIVY. Residues 1075–1631 are Cytoplasmic-facing; that stretch reads RRKHQELQAM…DALLKTPPGP (557 aa). The Protein kinase domain maps to 1131–1407; sequence ITLIRGLGHG…IEYCTQDPDV (277 aa). Residues 1137 to 1145 and Lys1165 each bind ATP; that span reads LGHGAFGEV. Asp1264 (proton acceptor) is an active-site residue. 3 disordered regions span residues 1423–1493, 1526–1554, and 1609–1631; these read EEKV…GHVN, WFTE…REGS, and FEGT…PPGP.

In terms of assembly, homodimer; homodimerizes following heparin- and ligand-binding. Interacts with CBL, IRS1, PIK3R1 and PLCG1. Interacts with FRS2 and SHC1. Interacts with PTN and MDK. Post-translationally, phosphorylated at tyrosine residues by autocatalysis, which activates kinase activity. In cells not stimulated by a ligand, receptor protein tyrosine phosphatase beta and zeta complex (PTPRB/PTPRZ1) dephosphorylates ALK at the sites in ALK that are undergoing autophosphorylation through autoactivation.

It localises to the cell membrane. The catalysed reaction is L-tyrosyl-[protein] + ATP = O-phospho-L-tyrosyl-[protein] + ADP + H(+). With respect to regulation, activated upon ALKAL2 ligand-binding. ALKAL2-driven activation is coupled with heparin-binding. Following ligand-binding, homodimerizes and autophosphorylates, activating its kinase activity. Inactivated through dephosphorylation by receptor protein tyrosine phosphatase beta and zeta complex (PTPRB/PTPRZ1) when there is no stimulation by a ligand. In terms of biological role, neuronal receptor tyrosine kinase that is essentially and transiently expressed in specific regions of the central and peripheral nervous systems and plays an important role in the genesis and differentiation of the nervous system. Also acts as a key thinness protein involved in the resistance to weight gain: in hypothalamic neurons, controls energy expenditure acting as a negative regulator of white adipose tissue lipolysis and sympathetic tone to fine-tune energy homeostasis. Following activation by ALKAL2 ligand at the cell surface, transduces an extracellular signal into an intracellular response. In contrast, ALKAL1 is not a potent physiological ligand for ALK. Ligand-binding to the extracellular domain induces tyrosine kinase activation, leading to activation of the mitogen-activated protein kinase (MAPK) pathway. Phosphorylates almost exclusively at the first tyrosine of the Y-x-x-x-Y-Y motif. Induces tyrosine phosphorylation of CBL, FRS2, IRS1 and SHC1, as well as of the MAP kinases MAPK1/ERK2 and MAPK3/ERK1. ALK activation may also be regulated by pleiotrophin (PTN) and midkine (MDK). PTN-binding induces MAPK pathway activation, which is important for the anti-apoptotic signaling of PTN and regulation of cell proliferation. MDK-binding induces phosphorylation of the ALK target insulin receptor substrate (IRS1), activates mitogen-activated protein kinases (MAPKs) and PI3-kinase, resulting also in cell proliferation induction. Drives NF-kappa-B activation, probably through IRS1 and the activation of the AKT serine/threonine kinase. Recruitment of IRS1 to activated ALK and the activation of NF-kappa-B are essential for the autocrine growth and survival signaling of MDK. This Canis lupus familiaris (Dog) protein is ALK tyrosine kinase receptor.